The primary structure comprises 63 residues: uncharacterized protein (63 aa).

Residues 1-15 form the signal peptide; the sequence is MRNPVVWGMIYFAVG. Residue Cys-16 is the site of N-palmitoyl cysteine attachment. Cys-16 carries the S-diacylglycerol cysteine lipid modification. Residues 34-56 form a helical membrane-spanning segment; it reads SILLMVFAAYNISISFKMFAFSF.

It is found in the cell membrane. This is an uncharacterized protein from Bacillus subtilis (strain 168).